Reading from the N-terminus, the 153-residue chain is 6,7-dimethyl-8-ribityllumazine synthase (153 aa).

5-amino-6-(D-ribitylamino)uracil-binding positions include Phe22, 56–58 (AFE), and 80–82 (TVI). A (2S)-2-hydroxy-3-oxobutyl phosphate-binding site is contributed by 85–86 (ST). Residue His88 is the Proton donor of the active site. Residue Phe113 participates in 5-amino-6-(D-ribitylamino)uracil binding. Residue Arg127 participates in (2S)-2-hydroxy-3-oxobutyl phosphate binding.

The protein belongs to the DMRL synthase family. As to quaternary structure, forms an icosahedral capsid composed of 60 subunits, arranged as a dodecamer of pentamers.

It carries out the reaction (2S)-2-hydroxy-3-oxobutyl phosphate + 5-amino-6-(D-ribitylamino)uracil = 6,7-dimethyl-8-(1-D-ribityl)lumazine + phosphate + 2 H2O + H(+). It participates in cofactor biosynthesis; riboflavin biosynthesis; riboflavin from 2-hydroxy-3-oxobutyl phosphate and 5-amino-6-(D-ribitylamino)uracil: step 1/2. Its function is as follows. Catalyzes the formation of 6,7-dimethyl-8-ribityllumazine by condensation of 5-amino-6-(D-ribitylamino)uracil with 3,4-dihydroxy-2-butanone 4-phosphate. This is the penultimate step in the biosynthesis of riboflavin. This chain is 6,7-dimethyl-8-ribityllumazine synthase, found in Glaesserella parasuis serovar 5 (strain SH0165) (Haemophilus parasuis).